The chain runs to 386 residues: Succinate--CoA ligase [ADP-forming] subunit beta (386 aa).

The region spanning 9–244 (KQILKRFGIS…YDEEIPEEIE (236 aa)) is the ATP-grasp domain. Residues Lys-46, 53 to 55 (GRG), Glu-99, Cys-102, and Glu-107 contribute to the ATP site. Mg(2+) is bound by residues Asn-199 and Asp-213. Residues Asn-264 and 320-322 (GIM) contribute to the substrate site.

It belongs to the succinate/malate CoA ligase beta subunit family. In terms of assembly, heterotetramer of two alpha and two beta subunits. Mg(2+) is required as a cofactor.

It catalyses the reaction succinate + ATP + CoA = succinyl-CoA + ADP + phosphate. The catalysed reaction is GTP + succinate + CoA = succinyl-CoA + GDP + phosphate. Its pathway is carbohydrate metabolism; tricarboxylic acid cycle; succinate from succinyl-CoA (ligase route): step 1/1. In terms of biological role, succinyl-CoA synthetase functions in the citric acid cycle (TCA), coupling the hydrolysis of succinyl-CoA to the synthesis of either ATP or GTP and thus represents the only step of substrate-level phosphorylation in the TCA. The beta subunit provides nucleotide specificity of the enzyme and binds the substrate succinate, while the binding sites for coenzyme A and phosphate are found in the alpha subunit. This Ehrlichia ruminantium (strain Welgevonden) protein is Succinate--CoA ligase [ADP-forming] subunit beta.